A 968-amino-acid polypeptide reads, in one-letter code: Alanine--tRNA ligase, cytoplasmic (968 aa).

M1 carries the N-acetylmethionine modification. 2 positions are modified to phosphoserine: S3 and S8. K19 carries the N6-acetyllysine modification. ATP-binding positions include R77, H95, W176, and 214–216 (IWN). 2 residues coordinate L-alanine: N216 and D239. Residue G243 participates in ATP binding. S399 and S555 each carry phosphoserine. The Zn(2+) site is built by H605, H609, C723, and H727. The short motif at 750–763 (RRIVAVTGAEAQKA) is the Nuclear localization signal element. The residue at position 876 (K876) is an N6-acetyllysine. K943 is modified (N6,N6,N6-trimethyllysine; alternate). K943 is subject to N6,N6-dimethyllysine; alternate. Residue K943 is modified to N6-methyllysine; alternate.

This sequence belongs to the class-II aminoacyl-tRNA synthetase family. In terms of assembly, monomer. Interacts with ANKRD16; the interaction is direct. It depends on Zn(2+) as a cofactor. ISGylated. In terms of processing, methylation at 'Lys-943' by METTL21C.

The protein resides in the cytoplasm. It localises to the nucleus. The enzyme catalyses tRNA(Ala) + L-alanine + ATP = L-alanyl-tRNA(Ala) + AMP + diphosphate. It catalyses the reaction (S)-lactate + ATP + H(+) = (S)-lactoyl-AMP + diphosphate. It carries out the reaction (S)-lactoyl-AMP + L-lysyl-[protein] = N(6)-[(S)-lactoyl]-L-lysyl-[protein] + AMP + 2 H(+). The protein lactyltransferase activity is inhibited by beta-alanine. In terms of biological role, catalyzes the attachment of alanine to tRNA(Ala) in a two-step reaction: alanine is first activated by ATP to form Ala-AMP and then transferred to the acceptor end of tRNA(Ala). Also edits incorrectly charged tRNA(Ala) via its editing domain. In presence of high levels of lactate, also acts as a protein lactyltransferase that mediates lactylation of lysine residues in target proteins, such as TEAD1, TP53/p53 and YAP1. Protein lactylation takes place in a two-step reaction: lactate is first activated by ATP to form lactate-AMP and then transferred to lysine residues of target proteins. Acts as an inhibitor of TP53/p53 activity by catalyzing lactylation of TP53/p53. Acts as a positive regulator of the Hippo pathway by mediating lactylation of TEAD1 and YAP1. This is Alanine--tRNA ligase, cytoplasmic from Homo sapiens (Human).